Consider the following 296-residue polypeptide: 4-hydroxy-tetrahydrodipicolinate synthase (296 aa).

Threonine 50 lines the pyruvate pocket. Tyrosine 138 (proton donor/acceptor) is an active-site residue. The Schiff-base intermediate with substrate role is filled by lysine 166. Residue isoleucine 208 coordinates pyruvate.

Belongs to the DapA family. As to quaternary structure, homotetramer; dimer of dimers.

It is found in the cytoplasm. The catalysed reaction is L-aspartate 4-semialdehyde + pyruvate = (2S,4S)-4-hydroxy-2,3,4,5-tetrahydrodipicolinate + H2O + H(+). The protein operates within amino-acid biosynthesis; L-lysine biosynthesis via DAP pathway; (S)-tetrahydrodipicolinate from L-aspartate: step 3/4. Functionally, catalyzes the condensation of (S)-aspartate-beta-semialdehyde [(S)-ASA] and pyruvate to 4-hydroxy-tetrahydrodipicolinate (HTPA). This chain is 4-hydroxy-tetrahydrodipicolinate synthase, found in Thiobacillus denitrificans (strain ATCC 25259 / T1).